The following is a 220-amino-acid chain: Glutathione S-transferase 2 (220 aa).

Residues 2–88 (VVTLGYWDIR…YIARKHNMCG (87 aa)) enclose the GST N-terminal domain. Glutathione contacts are provided by residues 7 to 8 (YW), 43 to 46 (PSDW), Lys50, 59 to 60 (NL), and 72 to 73 (QS). Positions 90 to 208 (TEVEKQRVDV…RSGRFMKAPI (119 aa)) constitute a GST C-terminal domain. Tyr116 serves as a coordination point for substrate.

The protein belongs to the GST superfamily. Mu family. In terms of assembly, homodimer.

The protein localises to the cytoplasm. It catalyses the reaction RX + glutathione = an S-substituted glutathione + a halide anion + H(+). Functionally, conjugation of reduced glutathione to a wide number of exogenous and endogenous hydrophobic electrophiles. Participates in the formation of novel hepoxilin regioisomers. The sequence is that of Glutathione S-transferase 2 (GSTM2) from Gallus gallus (Chicken).